The following is a 225-amino-acid chain: Thymidylate kinase (225 aa).

Position 12–19 (12–19) interacts with ATP; it reads GGEGAGKS.

The protein belongs to the thymidylate kinase family.

It catalyses the reaction dTMP + ATP = dTDP + ADP. Functionally, phosphorylation of dTMP to form dTDP in both de novo and salvage pathways of dTTP synthesis. The chain is Thymidylate kinase from Chelativorans sp. (strain BNC1).